The primary structure comprises 938 residues: Isoleucine--tRNA ligase (938 aa).

The short motif at 58 to 68 (PYANGNIHIGH) is the 'HIGH' region element. E562 is a binding site for L-isoleucyl-5'-AMP. The 'KMSKS' region motif lies at 603 to 607 (KMSKS). Position 606 (K606) interacts with ATP. 4 residues coordinate Zn(2+): C901, C904, C921, and C924.

This sequence belongs to the class-I aminoacyl-tRNA synthetase family. IleS type 1 subfamily. Monomer. It depends on Zn(2+) as a cofactor.

Its subcellular location is the cytoplasm. The catalysed reaction is tRNA(Ile) + L-isoleucine + ATP = L-isoleucyl-tRNA(Ile) + AMP + diphosphate. Functionally, catalyzes the attachment of isoleucine to tRNA(Ile). As IleRS can inadvertently accommodate and process structurally similar amino acids such as valine, to avoid such errors it has two additional distinct tRNA(Ile)-dependent editing activities. One activity is designated as 'pretransfer' editing and involves the hydrolysis of activated Val-AMP. The other activity is designated 'posttransfer' editing and involves deacylation of mischarged Val-tRNA(Ile). The polypeptide is Isoleucine--tRNA ligase (Actinobacillus pleuropneumoniae serotype 7 (strain AP76)).